Here is a 168-residue protein sequence, read N- to C-terminus: Protein C2-DOMAIN ABA-RELATED 3 (168 aa).

One can recognise a C2 domain in the interval 1–106; it reads MSLMDNLLGI…IEALRMELSG (106 aa). The Ca(2+) site is built by R24, D25, D30, D76, H77, D78, and D84.

This sequence belongs to the plant CAR protein family. As to quaternary structure, binds to PYR/PYL/RCAR abscisic acid intracellular receptors in an ABA-independent manner, both at the plasma membrane and in the nucleus. Requires Ca(2+) as cofactor.

Its subcellular location is the cell membrane. The protein localises to the nucleus. Its function is as follows. Stimulates the GTPase/ATPase activities of Obg-like ATPases. Mediates the transient calcium-dependent interaction of PYR/PYL/RCAR abscisic acid (ABA) receptors with the plasma membrane and thus regulates ABA sensitivity. This Arabidopsis thaliana (Mouse-ear cress) protein is Protein C2-DOMAIN ABA-RELATED 3.